The sequence spans 230 residues: MASCAARGPAELSKAQAVRRIGILGGTFDPVHIGHLRSALEVAEFMGLDELRLLPNARPPHRDTPQVAAQDRLAMVREAVQGVACLSVDARELERDKPSYTIDTLESIRAELSGHDQLFLVLGWDAFCGLPAWHRWEELLQHCHILVLQRPDADVEPPDELRNLLAARSESDPTAMSGPAGNISFVWQTPLAVSATQIRQLLASGKSVRFLVPDAVLAYIEAHELYRAPN.

Belongs to the NadD family.

The enzyme catalyses nicotinate beta-D-ribonucleotide + ATP + H(+) = deamido-NAD(+) + diphosphate. Its pathway is cofactor biosynthesis; NAD(+) biosynthesis; deamido-NAD(+) from nicotinate D-ribonucleotide: step 1/1. Functionally, catalyzes the reversible adenylation of nicotinate mononucleotide (NaMN) to nicotinic acid adenine dinucleotide (NaAD). This Pseudomonas putida (strain ATCC 47054 / DSM 6125 / CFBP 8728 / NCIMB 11950 / KT2440) protein is Probable nicotinate-nucleotide adenylyltransferase.